The chain runs to 195 residues: MRKATLDRNTAETKIHLELHVDGKGKYEISTGIRFFDHMLELFTRHGAFDVTLRCEGDLDVDQHHTVEDVGIALGQAFTQALGSKMGILRAGYFVMPMDETLAVAAVDLSGRSAYAVDTKVKVRIVGDLQTELVDDFFEGFSRGALANVHIKVMYGRSNHHKIEASFKAFARALRFACAKDKRLAKVLPSTKGLL.

Belongs to the imidazoleglycerol-phosphate dehydratase family.

The protein resides in the cytoplasm. It catalyses the reaction D-erythro-1-(imidazol-4-yl)glycerol 3-phosphate = 3-(imidazol-4-yl)-2-oxopropyl phosphate + H2O. It functions in the pathway amino-acid biosynthesis; L-histidine biosynthesis; L-histidine from 5-phospho-alpha-D-ribose 1-diphosphate: step 6/9. This chain is Imidazoleglycerol-phosphate dehydratase, found in Koribacter versatilis (strain Ellin345).